We begin with the raw amino-acid sequence, 82 residues long: Conotoxin Tx6.6 (82 aa).

Residues 1-19 form the signal peptide; the sequence is MKLTCVMIVAVLFLTAWTL. The propeptide occupies 20–51; it reads VMADDSNNGLANLFSKLRDEMEDPEGSKLEKK. 3 cysteine pairs are disulfide-bonded: Cys-53-Cys-71, Cys-60-Cys-76, and Cys-70-Cys-81. An Alanine amide; partial modification is found at Ala-82.

Belongs to the O1 superfamily. In terms of tissue distribution, expressed by the venom duct.

The protein localises to the secreted. Its function is as follows. Omega-conotoxins act at presynaptic membranes, they bind and block voltage-gated calcium channels (Cav). This Conus textile (Cloth-of-gold cone) protein is Conotoxin Tx6.6.